The following is a 146-amino-acid chain: Large ribosomal subunit protein uL13 (146 aa).

This sequence belongs to the universal ribosomal protein uL13 family. As to quaternary structure, part of the 50S ribosomal subunit.

This protein is one of the early assembly proteins of the 50S ribosomal subunit, although it is not seen to bind rRNA by itself. It is important during the early stages of 50S assembly. The protein is Large ribosomal subunit protein uL13 of Spiroplasma citri.